The chain runs to 354 residues: G-protein coupled estrogen receptor 1 (354 aa).

Residues 1–40 (MEEQTTSLVWIYVNSTEQLNTSYEYNTTYLIEDSDKYQSY) lie on the Extracellular side of the membrane. The chain crosses the membrane as a helical span at residues 41–61 (VIGLFLSCLYTILLFPIGFIG). Over 62-81 (NILILVVNLNHRGKMAIPDL) the chain is Cytoplasmic. A helical membrane pass occupies residues 82-102 (YFVNLAVADLILVADSLIEVF). Topologically, residues 103–112 (NLNEKYYDYA) are extracellular. A helical transmembrane segment spans residues 113–133 (VLCTFMSLFLQVNMYSSIFFL). C115 and C192 are oxidised to a cystine. Over 134–160 (TWMSFDRYIALANSMSSSPLRTMQHAK) the chain is Cytoplasmic. Residues 161–181 (LSCGLIWMASILATLLPFTIV) traverse the membrane as a helical segment. Residues 182–202 (QTQHRGEVHFCFANVFEIQWL) are Extracellular-facing. Residues 203–223 (EVTIGFLVPFSIIGLCYSLIG) form a helical membrane-spanning segment. The Cytoplasmic segment spans residues 224-245 (RILMRSQKHRGLWPRRQKALRM). A helical transmembrane segment spans residues 246 to 266 (IVVVVLVFFICWLPENVFISI). Topologically, residues 267-292 (QLLQGTADPSQRTATTLRHDYPLTGH) are extracellular. A helical transmembrane segment spans residues 293–313 (IVNLAAFSNSCLNPIIYSFLG). Over 314-353 (ETFRDKLRLFIKQKASWSVVNRFCHHGLDLHLPVRSEVSE) the chain is Cytoplasmic.

This sequence belongs to the G-protein coupled receptor 1 family. As to quaternary structure, homodimer. Heterodimer. In terms of tissue distribution, expressed in oocytes (at protein level). Highly expressed in brain, heart, testis and ovary. Weakly expressed in muscle and intestine.

Its subcellular location is the nucleus. It is found in the cytoplasm. It localises to the perinuclear region. The protein resides in the cytoskeleton. The protein localises to the cytoplasmic vesicle membrane. Its subcellular location is the cell membrane. It is found in the basolateral cell membrane. It localises to the endoplasmic reticulum membrane. The protein resides in the early endosome. The protein localises to the recycling endosome. Its subcellular location is the golgi apparatus. It is found in the trans-Golgi network. It localises to the golgi apparatus membrane. The protein resides in the cell projection. The protein localises to the dendrite. Its subcellular location is the dendritic spine membrane. It is found in the axon. It localises to the postsynaptic density. The protein resides in the mitochondrion membrane. Its function is as follows. Membrane G-protein coupled estrogen receptor that binds to 17-beta-estradiol (E2) with high affinity, leading to rapid and transient activation of numerous intracellular signaling pathways. Plays a role in the embryonic development of sensory and motor neurons. May induce apoptosis and reduce proliferation of brain cells. Involved in maintenance of meiotic arrest in oocytes. This Micropogonias undulatus (Atlantic croaker) protein is G-protein coupled estrogen receptor 1 (gper1).